Consider the following 3471-residue polypeptide: Abnormal spindle-like microcephaly-associated protein homolog (3471 aa).

The tract at residues methionine 1–glutamate 26 is disordered. Phosphoserine occurs at positions 274, 277, 361, 386, and 419. Residues glutamate 555–serine 564 show a composition bias toward polar residues. Residues glutamate 555 to glutamate 576 form a disordered region. Serine 599 carries the post-translational modification Phosphoserine. In terms of domain architecture, Calponin-homology (CH) 1 spans lysine 914 to glutamine 1050. Residues valine 1051–serine 1072 adopt a coiled-coil conformation. Serine 1097 carries the post-translational modification Phosphoserine. The Calponin-homology (CH) 2 domain occupies serine 1104–leucine 1255. IQ domains are found at residues glutamine 1341–glutamine 1372, tyrosine 1387–serine 1416, leucine 1576–glutamine 1607, methionine 1599–serine 1628, threonine 1626–lysine 1655, isoleucine 1649–lysine 1678, methionine 1722–serine 1751, glutamine 1745–glutamine 1776, valine 1795–lysine 1824, glutamine 1818–lysine 1847, threonine 1868–lysine 1897, glutamate 1891–glutamine 1922, leucine 1941–glutamine 1972, glutamine 1964–glutamine 1995, threonine 2014–threonine 2043, cysteine 2037–glutamine 2068, leucine 2087–lysine 2118, methionine 2110–glutamine 2141, isoleucine 2160–glutamine 2191, methionine 2183–threonine 2212, leucine 2233–glutamine 2264, methionine 2256–glutamine 2287, valine 2305–glutamine 2336, glutamine 2378–glutamine 2409, methionine 2401–glutamine 2432, leucine 2451–glutamine 2482, glutamine 2524–glutamine 2555, arginine 2659–glutamine 2690, methionine 2682–glutamine 2713, valine 2732–alanine 2761, glutamine 2853–glutamine 2884, isoleucine 2903–lysine 2932, isoleucine 2926–alanine 2957, lysine 2948–glutamine 2979, arginine 3023–glutamine 3054, phenylalanine 3073–histidine 3104, glutamine 3134–lysine 3163, glutamine 3175–lysine 3204, and phenylalanine 3198–serine 3229.

It localises to the cytoplasm. Its subcellular location is the cytoskeleton. It is found in the spindle. The protein resides in the nucleus. Functionally, probable role in mitotic spindle regulation and coordination of mitotic processes. May have a preferential role in regulating neurogenesis. This is Abnormal spindle-like microcephaly-associated protein homolog (ASPM) from Pongo pygmaeus (Bornean orangutan).